The following is a 695-amino-acid chain: MSEEKASSPSGKMDGEKPLNPWPEYINTRLDMYHKLKAEHDSILAEKAAKDSKPIKVTLPDGKQVDAESWKTTPYQIACGISQGLADNTVVAKVNKVVWDLDRPLETDCTLELLKFEDEEAQAVYWHSSAHIMGEAMERVYGGCLCYGPPIENGFYYDMYLEEGGVSSNDFSSLETLCKKIIKEKQTFERLEVKKETLLEMFKYNKFKCRILNEKVNTPTTTVYRCGPLIDLCRGPHVRHTGKIKTLKIHKNSSTYWEGKADMETLQRIYGISFPDPKLLKEWEKFQEEAKNRDHRKIGRDQELYFFHELSPGSCFFLPKGAYIYNTLMEFIRSEYRKRGFQEVVTPNIFNSRLWMTSGHWQHYSENMFSFEVEKEQFALKPMNCPGHCLMFDHRPRSWRELPLRLADFGVLHRNELSGALTGLTRVRRFQQDDAHIFCAMEQIEDEIKGCLDFLRTVYSVFGFSFKLNLSTRPEKFLGDIEIWNQAEKQLENSLNEFGEKWELNPGDGAFYGPKIDIQIKDAIGRYHQCATIQLDFQLPIRFNLTYVSHDGDDKKRPVIVHRAILGSVERMIAILTENYGGKWPFWLSPRQVMVVPVGPTCDEYAQKVRQEFHDAKFMVDIDLDPGCTLNKKIRNAQLAQYNFILVVGEKEKASGTVNIRTRDNKVHGERTVGETVERLQQLKQLRSKQAEEEF.

The disordered stretch occupies residues 1 to 21 (MSEEKASSPSGKMDGEKPLNP). Residues 51-115 (DSKPIKVTLP…ETDCTLELLK (65 aa)) enclose the TGS domain. Position 215 is an N6-acetyllysine (lysine 215). Phosphothreonine is present on threonine 218. At tyrosine 270 the chain carries Phosphotyrosine. Threonine 425 bears the Phosphothreonine mark.

It belongs to the class-II aminoacyl-tRNA synthetase family. Homodimer. Post-translationally, ISGylated.

It is found in the cytoplasm. It carries out the reaction tRNA(Thr) + L-threonine + ATP = L-threonyl-tRNA(Thr) + AMP + diphosphate + H(+). Catalyzes the attachment of threonine to tRNA(Thr) in a two-step reaction: threonine is first activated by ATP to form Thr-AMP and then transferred to the acceptor end of tRNA(Thr). Also edits incorrectly charged tRNA(Thr) via its editing domain, at the post-transfer stage. The protein is Threonine--tRNA ligase 1, cytoplasmic (Tars1) of Rattus norvegicus (Rat).